The primary structure comprises 75 residues: Porwaprin-d (75 aa).

The first 24 residues, 1–24 (MSSGGLLLLLGLLTLWAELTPVSS), serve as a signal peptide directing secretion. Positions 27-72 (RPKKPGLCPPRPQKPPCVRECKNDWRCPGEQKCCRYGCIYECRDPI) constitute a WAP domain. 4 disulfide bridges follow: C34-C60, C43-C64, C47-C59, and C53-C68.

This sequence belongs to the venom waprin family. Expressed by the venom gland.

The protein localises to the secreted. Its function is as follows. Damages membranes of susceptible bacteria. Has no hemolytic activity. Not toxic to mice. Does not inhibit the proteinases elastase and cathepsin G. The protein is Porwaprin-d of Pseudechis porphyriacus (Red-bellied black snake).